The primary structure comprises 878 residues: Vacuolar membrane protease (878 aa).

At 1 to 16 (MASLRLPRANPLAFTR) the chain is on the cytoplasmic side. Residues 17–37 (WPVTVITAIVYLALLIPLLVV) traverse the membrane as a helical segment. The Vacuolar portion of the chain corresponds to 38–390 (HHVVPSAPSS…STFVLFQLHT (353 aa)). N-linked (GlcNAc...) asparagine glycans are attached at residues asparagine 53 and asparagine 119. Residues histidine 174 and aspartate 186 each coordinate Zn(2+). Glutamate 220 serves as the catalytic Proton acceptor. The Zn(2+) site is built by glutamate 221, glutamate 246, and histidine 319. A helical membrane pass occupies residues 391–411 (LFALLVTLLIVGPLTLLFTSI). At 412-442 (ALTKADKMYLFRSSAKSEDRLDVVPLQGLRG) the chain is on the cytoplasmic side. A helical membrane pass occupies residues 443–463 (FFRFPFLFGIPTVVTVGLAYL). The Vacuolar segment spans residues 464–473 (VTKVNPYIIH). The helical transmembrane segment at 474 to 494 (SSAYAVWSMMVAAWVFLAWFV) threads the bilayer. Over 495 to 508 (SRVADFARPSAFHR) the chain is Cytoplasmic. Residues 509 to 529 (IYTLTWMYVLSWVSAVIATVY) form a helical membrane-spanning segment. The Vacuolar segment spans residues 530-533 (ANQR). Residues 534 to 554 (GLAGGYFIFFFHAGIFLATWI) traverse the membrane as a helical segment. Over 555–659 (SYLELFALPS…ALPKWTWGLQ (105 aa)) the chain is Cytoplasmic. Residues 577–590 (GRASGHGSRRGTTS) show a composition bias toward low complexity. The segment at 577 to 611 (GRASGHGSRRGTTSGEDDGEEAEEEPTESTSLLGS) is disordered. Over residues 591 to 603 (GEDDGEEAEEEPT) the composition is skewed to acidic residues. A helical membrane pass occupies residues 660–680 (LLLTAPITLIMVGPLALLTIS). The Vacuolar segment spans residues 681–693 (AISQTGQDGGHPL). The chain crosses the membrane as a helical span at residues 694-714 (FAYVAIAIFTTIMLTPLLPFI). The Cytoplasmic segment spans residues 715–721 (HRYTYHV). The chain crosses the membrane as a helical span at residues 722–742 (PLFLLAVFLGTLIYNLVAFPF). The Vacuolar portion of the chain corresponds to 743-878 (SDSNRLKLYY…RRAFEIGNDD (136 aa)).

It belongs to the peptidase M28 family. The cofactor is Zn(2+).

Its subcellular location is the vacuole membrane. Its function is as follows. May be involved in vacuolar sorting and osmoregulation. The protein is Vacuolar membrane protease of Aspergillus flavus (strain ATCC 200026 / FGSC A1120 / IAM 13836 / NRRL 3357 / JCM 12722 / SRRC 167).